The sequence spans 403 residues: Microtubule-associated protein tau (403 aa).

Residues 1–32 show a composition bias toward basic and acidic residues; that stretch reads MAEPRQEFDVMEDHAQGDYTLQDHEGDMEPGL. The disordered stretch occupies residues 1–219; the sequence is MAEPRQEFDV…GPMPDLKNVK (219 aa). Residue alanine 2 is modified to N-acetylalanine. At tyrosine 19 the chain carries Phosphotyrosine. Residue lysine 33 forms a Glycyl lysine isopeptide (Lys-Gly) (interchain with G-Cter in ubiquitin) linkage. A phosphoserine mark is found at serine 35 and serine 50. Residues 50 to 60 show a composition bias toward polar residues; sequence SETSDAKSTPT. A phosphothreonine mark is found at threonine 58, threonine 60, and threonine 71. Residues 90-106 show a composition bias toward basic and acidic residues; that stretch reads KGKDGTGPDDKKAKGAD. Threonine 115 is subject to Phosphothreonine. At arginine 117 the chain carries Omega-N-methylarginine. Lysine 125 carries the post-translational modification N6,N6-dimethyllysine; alternate. Lysine 125 is modified (N6-acetyllysine; alternate). Phosphothreonine occurs at positions 131, 137, 138, and 143. Residues 136 to 147 are compositionally biased toward low complexity; it reads KTTPTPKTSPGT. Serine 153 and serine 157 each carry phosphoserine. Residues 156-176 show a composition bias toward low complexity; that stretch reads RSGYSSPGSPGTPGSRSRTPS. Tyrosine 159 bears the Phosphotyrosine mark. Residues serine 160, serine 161, and serine 164 each carry the phosphoserine modification. Phosphothreonine is present on residues threonine 167 and threonine 174. Serine 176 is modified (phosphoserine). Threonine 179 bears the Phosphothreonine mark. At lysine 187 the chain carries N6-acetyllysine. Threonine 193 is subject to Phosphothreonine. Phosphoserine is present on residues serine 197 and serine 199. 4 Tau/MAP repeats span residues 206 to 236, 237 to 267, 268 to 298, and 299 to 330; these read QAAPGPMPDLKNVKSKIGSTENLKHQPGGGK, VQIINKKLDLSNVQSKCGSKDNIKHVPGGGS, VQIVYKPVDLSKVTSKCGSLGNIHHKPGGGQ, and VEVKSEKLDFKDRVQSKIGSLDNITHVPGGGN. Lysine 216 is covalently cross-linked (Glycyl lysine isopeptide (Lys-Gly) (interchain with G-Cter in ubiquitin)). Lysine 221 carries the N6-acetyllysine; alternate modification. Lysine 221 carries the post-translational modification N6-methyllysine; alternate. Lysine 221 is covalently cross-linked (Glycyl lysine isopeptide (Lys-Gly) (interchain with G-Cter in ubiquitin); alternate). Serine 224 is modified (phosphoserine). Residue lysine 229 forms a Glycyl lysine isopeptide (Lys-Gly) (interchain with G-Cter in ubiquitin) linkage. At lysine 243 the chain carries N6-acetyllysine; alternate. Residue lysine 243 forms a Glycyl lysine isopeptide (Lys-Gly) (interchain with G-Cter in ubiquitin); alternate linkage. Phosphoserine occurs at positions 247 and 251. N6-acetyllysine is present on lysine 252. Cysteine 253 and cysteine 284 form a disulfide bridge. Residue serine 255 is modified to Phosphoserine. The residue at position 260 (lysine 260) is an N6-acetyllysine; alternate. A Glycyl lysine isopeptide (Lys-Gly) (interchain with G-Cter in ubiquitin); alternate cross-link involves residue lysine 260. Serine 267 is modified (phosphoserine). Residue lysine 273 is modified to N6,N6-dimethyllysine; alternate. An N6-acetyllysine; alternate mark is found at lysine 273, lysine 279, and lysine 283. Residues lysine 273, lysine 279, and lysine 283 each participate in a glycyl lysine isopeptide (Lys-Gly) (interchain with G-Cter in ubiquitin); alternate cross-link. At serine 286 the chain carries Phosphoserine. Lysine 293, lysine 305, and lysine 309 each carry N6-acetyllysine; alternate. Glycyl lysine isopeptide (Lys-Gly) (interchain with G-Cter in ubiquitin); alternate cross-links involve residues lysine 293, lysine 305, and lysine 309. Arginine 311 carries the omega-N-methylarginine modification. Serine 314 is subject to Phosphoserine. Residue lysine 315 forms a Glycyl lysine isopeptide (Lys-Gly) (interchain with G-Cter in ubiquitin) linkage. Position 318 is a phosphoserine (serine 318). N6-acetyllysine; alternate is present on lysine 331. Lysine 331 is covalently cross-linked (Glycyl lysine isopeptide (Lys-Gly) (interchain with G-Cter in ubiquitin); alternate). Lysine 337 is covalently cross-linked (Glycyl lysine isopeptide (Lys-Gly) (interchain with G-Cter in ubiquitin)). N6-acetyllysine; alternate is present on lysine 347. Residue lysine 347 forms a Glycyl lysine isopeptide (Lys-Gly) (interchain with G-Cter in ubiquitin); alternate linkage. Position 356 is a phosphotyrosine (tyrosine 356). A phosphoserine mark is found at serine 358 and serine 362. A disordered region spans residues 360 to 379; sequence VVSGDTSPRHLSNVSSTGSI. A compositionally biased stretch (polar residues) spans 363–378; sequence GDTSPRHLSNVSSTGS. Phosphothreonine is present on threonine 365. 4 positions are modified to phosphoserine: serine 366, serine 371, serine 378, and serine 384. A Phosphothreonine modification is found at threonine 389.

As to quaternary structure, interacts with MARK1, MARK2, MARK3 and MARK4. Interacts with SQSTM1 when polyubiquitinated. Interacts with PSMC2 through SQSTM1. Interacts with FKBP4. Binds to CSNK1D. Interacts with SGK1. Interacts with PIN1. Interacts with LRRK2. Interacts with LRP1, leading to endocytosis; this interaction is reduced in the presence of LRPAP1/RAP. In terms of processing, polyubiquitinated. Requires functional TRAF6 and may provoke SQSTM1-dependent degradation by the proteasome. Phosphorylation at various serine and threonine residues in S-P or T-P motifs by proline-directed protein kinases (PDPK1, CDK1, CDK5, GSK3, MAPK) (a few sites per protein in interphase, more in mitosis), and at serine residues in K-X-G-S motifs by MAP/microtubule affinity-regulating kinase (MARK1, MARK2, MARK3, MARK4), causing detachment from microtubules, and their disassembly. Phosphorylation at Ser-224 by BRSK1 and BRSK2 in neurons affects ability to bind microtubules and plays a role in neuron polarization. Phosphorylated by PHK. Dephosphorylation at several serine and threonine residues by the serine/threonine phosphatase PPP5C. In terms of tissue distribution, expressed in neurons.

It is found in the cytoplasm. It localises to the cytosol. Its subcellular location is the cell membrane. The protein localises to the cytoskeleton. The protein resides in the cell projection. It is found in the axon. It localises to the dendrite. Promotes microtubule assembly and stability, and might be involved in the establishment and maintenance of neuronal polarity. The C-terminus binds axonal microtubules while the N-terminus binds neural plasma membrane components, suggesting that tau functions as a linker protein between both. Axonal polarity is predetermined by tau localization (in the neuronal cell) in the domain of the cell body defined by the centrosome. The short isoforms allow plasticity of the cytoskeleton whereas the longer isoforms may preferentially play a role in its stabilization. This chain is Microtubule-associated protein tau (MAPT), found in Capra hircus (Goat).